We begin with the raw amino-acid sequence, 241 residues long: Accessory protein p30II (241 aa).

Short sequence motifs (nuclear localization signal) lie at residues 73–78 (RRCRSR) and 91–98 (GPRRSRPR). Residues 86–153 (AFPPGGPRRS…HRNSPTDTKL (68 aa)) are disordered. Residues 107-138 (PSSTVSSSSLSFNSSSKDNSPSTNSSTSRSSG) are compositionally biased toward low complexity. The Mitochondrial targeting signal motif lies at 175-184 (LRVWRLCTRR).

Belongs to the HTLV-1 accessory protein p30II family. P30II binds to the KIX domains of CREBBP and EP300.

The protein localises to the host nucleus. It localises to the host nucleolus. Its subcellular location is the host mitochondrion inner membrane. P30II is a multifunctional regulator that sequesters EP300/CREBBP and down-regulates CREB-responsive element (CRE) and Tax-responsive element (TRE) mediated transcription. Specifically binds and represses tax/rex mRNA nuclear export. Since Tax and Rex are positive regulators of viral gene expression, their inhibition by p30II reduces virion production, and allows the virus to escape the host immune surveillance and persist latently in an immune-competent host. Functionally, p13II increases mitochondrial permeability to monovalent cations, producing a rapid, membrane potential-dependent influx of potassium. This could involve a channel-forming activity. Interferes with cell proliferation and transformation and promotes apoptosis induced by ceramide and Fas ligand, probably using the Ras signaling. This Human T-cell leukemia virus 1 (isolate Caribbea HS-35 subtype A) (HTLV-1) protein is Accessory protein p30II.